Reading from the N-terminus, the 910-residue chain is Chitin synthase A (910 aa).

The disordered stretch occupies residues 56–156 (NYHDDYDPRP…EPAPTPTPAP (101 aa)). Composition is skewed to basic and acidic residues over residues 57-84 (YHDD…HHDA) and 130-148 (DPHD…HDEP). 9 helical membrane passes run 366-386 (WFFQ…IDAG), 448-468 (SAFG…YVAL), 583-603 (VYQT…FLVF), 620-640 (VLFI…FILS), 655-675 (MVYF…FITV), 701-721 (TLII…IIFL), 730-750 (FIQY…YAFC), 828-848 (GVVL…LQAG), and 876-896 (LYSV…FLVV).

This sequence belongs to the chitin synthase family. Class I subfamily.

Its subcellular location is the cell membrane. The catalysed reaction is [(1-&gt;4)-N-acetyl-beta-D-glucosaminyl](n) + UDP-N-acetyl-alpha-D-glucosamine = [(1-&gt;4)-N-acetyl-beta-D-glucosaminyl](n+1) + UDP + H(+). In terms of biological role, polymerizes chitin, a structural polymer of the cell wall and septum, by transferring the sugar moiety of UDP-GlcNAc to the non-reducing end of the growing chitin polymer. The polypeptide is Chitin synthase A (CHSA) (Ampelomyces quisqualis (Powdery mildew agent)).